A 285-amino-acid polypeptide reads, in one-letter code: uncharacterized protein (285 aa).

The segment at 1 to 25 (MANQKKKTLPPQHQNQQPGFEYLMD) is disordered. 45–69 (IITGGDSGIGRAVSVLFAKEGANVV) is an NADP(+) binding site. S177 is a binding site for substrate. Residue Y190 is the Proton acceptor of the active site.

The protein belongs to the short-chain dehydrogenases/reductases (SDR) family.

This is an uncharacterized protein from Bacillus subtilis (strain 168).